Reading from the N-terminus, the 349-residue chain is MALVTTPTVNDGPLFAEVNMSSDFNAPTVRATVVQASTIFYDTPATLDKAERLLAEAASYGAQIVVFPEAFIGGYPRGSNFGVSIGNRTAKGKEDFRKYHSAAIDVPGPEVDRLAALAGKYKVYLVMGVIERDGYTLYCTVLFFGAQGRYLGKHRKLMPTALERIIWGFGDGSTIPVFETPIGKIGAAICWENKMPLLRTAMYAKGVEIYCAPTADSREVWQASMTHIALEGGCFVLSANQFCRRRDYPPPPEYVFEGTEENLTPDSVVCAGGSVIISPSGAVLAGPSYEGEALISADLDLGEIARAKFDFDVVGHYSRPEVLSLVVKDHPTNPVTFTSASTKIEDKTK.

Residues V29–L301 form the CN hydrolase domain. Catalysis depends on E69, which acts as the Proton acceptor. The active site involves K156. C190 functions as the Nucleophile in the catalytic mechanism.

The protein belongs to the carbon-nitrogen hydrolase superfamily. Nitrilase family. In terms of tissue distribution, ubiquitous.

It carries out the reaction L-asparagine = 3-cyano-L-alanine + H2O. The catalysed reaction is 3-cyano-L-alanine + 2 H2O = L-aspartate + NH4(+). Functionally, involved in the cyanide detoxification pathway. Has nitrilase and nitrile-hydratase activity in the ratio 4.0:1, producing both asparagine and aspartic acid from beta-cyano-L-alanine (Ala(CN)). Can also use 3-phenylpropionitrile as substrate, but not indole-3-acetonitrile. This chain is Bifunctional nitrilase/nitrile hydratase NIT4A (NIT4A), found in Lupinus angustifolius (Narrow-leaved blue lupine).